Reading from the N-terminus, the 359-residue chain is Cyclic AMP response element-binding protein B (359 aa).

Disordered regions lie at residues 1 to 73 (MDNS…AQGG) and 185 to 238 (VRNK…FTEI). A compositionally biased stretch (low complexity) spans 9 to 32 (NGNSSAASGSNDVVDVVAQQAAAA). A compositionally biased stretch (gly residues) spans 33–47 (VGGGGGGGGGGGGGN). Over residues 48 to 70 (PQQQQQNPQSTTAGGPTGATNNA) the composition is skewed to low complexity. Residues 198-257 (KPEPNTQHPEDSDESLSDDDSQHHRSELTRRPSYNKIFTEISGPDMSGASLPMSDGVLNS) enclose the KID domain. Phosphoserine is present on residues S209, S212, and S214. Over residues 217–227 (DSQHHRSELTR) the composition is skewed to basic and acidic residues. The region spanning 300–359 (TRKREIRLQKNREAARECRRKKKEYIKCLENRVAVLENQNKALIEELKSLKELYCQTKND) is the bZIP domain. The basic motif stretch occupies residues 301 to 326 (RKREIRLQKNREAARECRRKKKEYIK). A leucine-zipper region spans residues 328–349 (LENRVAVLENQNKALIEELKSL).

It belongs to the bZIP family. ATF subfamily. As to quaternary structure, homodimer. In terms of tissue distribution, most cells of the adult brain; cell bodies, but not neuropil.

It is found in the nucleus. Isoform E is a PKA-dependent transcriptional activator. Isoform J is a direct antagonist of activation by isoform E in cell culture. Binds the cAMP response element (CRE) (consensus: 5'-GTGACGT[AC][AG]-3'), a sequence present in many viral and cellular promoters. Has a role in long-term memory. The polypeptide is Cyclic AMP response element-binding protein B (Drosophila melanogaster (Fruit fly)).